We begin with the raw amino-acid sequence, 829 residues long: Protein Jade-1 (829 aa).

Residues 1 to 10 (MKRSRVPSTS) are compositionally biased toward polar residues. Residues 1-40 (MKRSRVPSTSEDSDNGSNSTSWSQHSNSKHRKQSGKRPSE) are disordered. Residues 15–26 (NGSNSTSWSQHS) show a composition bias toward low complexity. The PHD-type 1 zinc finger occupies 196–246 (DVVCDVCQSPDGEDGNEMVFCDKCNICVHQACYGILKVPEGSWLCRTCALG). The C2HC pre-PHD-type zinc-finger motif lies at 248–282 (FPKCHLCPKKGGAMKPTRSGTKWVHVSCALWIPEV). The PHD-type 2 zinc-finger motif lies at 306–362 (LICCLCKEKTGACIQCSAKSCRVAFHVTCGLHCGLKMNTILTEADEVKFKSFCPKHS). Disordered stretches follow at residues 368–408 (EEEG…PEET), 556–651 (PPVP…RRKS), and 697–829 (ATAP…VLAS). Residues 374–390 (DRPVKVPTREDRSRNRG) are compositionally biased toward basic and acidic residues. Polar residues-rich tracts occupy residues 394–405 (SASSQTRLSQNP), 570–586 (GQNSTLSSSEKGSNSYR), and 607–619 (SGDSVRSETVMSA). Residues 622–648 (RRSEGRTRSGESHRKEEESERPLEDRR) show a composition bias toward basic and acidic residues. The segment covering 697–714 (ATAPNMYSGSPRKTNASH) has biased composition (polar residues). The segment covering 738–754 (KRSERTSAGRQTERQEA) has biased composition (basic and acidic residues). The span at 762 to 774 (SSLKTFSTSPSSP) shows a compositional bias: low complexity. The segment covering 782–792 (TGSENRRHLEE) has biased composition (basic and acidic residues).

This sequence belongs to the JADE family. As to quaternary structure, component of the HBO1 complex composed.

The protein resides in the nucleus. The protein localises to the chromosome. It localises to the cytoplasm. It is found in the cytoskeleton. Its subcellular location is the cilium basal body. Functionally, scaffold subunit of some HBO1 complexes, which have a histone H4 acetyltransferase activity. Plays a key role in HBO1 complex by directing KAT7/HBO1 specificity towards histone H4 acetylation (H4K5ac, H4K8ac and H4K12ac), regulating DNA replication initiation, regulating DNA replication initiation. This is Protein Jade-1 (jade1) from Danio rerio (Zebrafish).